We begin with the raw amino-acid sequence, 469 residues long: Ribulose bisphosphate carboxylase large chain (469 aa).

K5 is subject to N6,N6,N6-trimethyllysine. Residues N114 and T164 each coordinate substrate. K166 functions as the Proton acceptor in the catalytic mechanism. K168 is a binding site for substrate. Residues K192, D194, and E195 each contribute to the Mg(2+) site. K192 carries the post-translational modification N6-carboxylysine. H285 (proton acceptor) is an active-site residue. Substrate contacts are provided by R286, H318, and S370.

The protein belongs to the RuBisCO large chain family. Type I subfamily. In terms of assembly, heterohexadecamer of 8 large chains and 8 small chains; disulfide-linked. The disulfide link is formed within the large subunit homodimers. It depends on Mg(2+) as a cofactor. In terms of processing, the disulfide bond which can form in the large chain dimeric partners within the hexadecamer appears to be associated with oxidative stress and protein turnover.

Its subcellular location is the plastid. The protein resides in the chloroplast. It carries out the reaction 2 (2R)-3-phosphoglycerate + 2 H(+) = D-ribulose 1,5-bisphosphate + CO2 + H2O. The enzyme catalyses D-ribulose 1,5-bisphosphate + O2 = 2-phosphoglycolate + (2R)-3-phosphoglycerate + 2 H(+). Its function is as follows. RuBisCO catalyzes two reactions: the carboxylation of D-ribulose 1,5-bisphosphate, the primary event in carbon dioxide fixation, as well as the oxidative fragmentation of the pentose substrate in the photorespiration process. Both reactions occur simultaneously and in competition at the same active site. This Cephalanthus occidentalis (Common buttonbush) protein is Ribulose bisphosphate carboxylase large chain.